Here is an 81-residue protein sequence, read N- to C-terminus: Probable small nuclear ribonucleoprotein G (81 aa).

A Sm domain is found at 5–76 (GQPPALKKYM…VVTVEALEPV (72 aa)).

Belongs to the snRNP Sm proteins family.

It localises to the nucleus. Its function is as follows. Probable common Sm protein, is found in U1 and U2 snRNPs and may be part of the spliceosome. The polypeptide is Probable small nuclear ribonucleoprotein G (C29) (Medicago sativa (Alfalfa)).